Reading from the N-terminus, the 47-residue chain is uncharacterized protein (47 aa).

Disordered stretches follow at residues 1–20 (MSTD…EEWQ) and 25–47 (EKEK…NRKG). Over residues 25–40 (EKEKDENNRLFQEQKQ) the composition is skewed to basic and acidic residues.

This is an uncharacterized protein from Dictyostelium discoideum (Social amoeba).